The sequence spans 252 residues: Chitooligosaccharide deacetylase (252 aa).

Residues H61 and H125 each contribute to the Mg(2+) site.

It belongs to the YdjC deacetylase family. ChbG subfamily. As to quaternary structure, homodimer. Requires Mg(2+) as cofactor.

It localises to the cytoplasm. The catalysed reaction is N,N'-diacetylchitobiose + H2O = N-acetyl-beta-D-glucosaminyl-(1-&gt;4)-D-glucosamine + acetate. It catalyses the reaction diacetylchitobiose-6'-phosphate + H2O = N'-monoacetylchitobiose-6'-phosphate + acetate. Its pathway is glycan degradation; chitin degradation. Its function is as follows. Involved in the degradation of chitin. ChbG is essential for growth on the acetylated chitooligosaccharides chitobiose and chitotriose but is dispensable for growth on cellobiose and chitosan dimer, the deacetylated form of chitobiose. Deacetylation of chitobiose-6-P and chitotriose-6-P is necessary for both the activation of the chb promoter by the regulatory protein ChbR and the hydrolysis of phosphorylated beta-glucosides by the phospho-beta-glucosidase ChbF. Catalyzes the removal of only one acetyl group from chitobiose-6-P to yield monoacetylchitobiose-6-P, the inducer of ChbR and the substrate of ChbF. This chain is Chitooligosaccharide deacetylase, found in Salmonella newport (strain SL254).